The chain runs to 304 residues: Non-specific ribonucleoside hydrolase RihC (304 aa).

H233 is a catalytic residue.

Belongs to the IUNH family. RihC subfamily.

Hydrolyzes both purine and pyrimidine ribonucleosides with a broad-substrate specificity. This Escherichia coli O17:K52:H18 (strain UMN026 / ExPEC) protein is Non-specific ribonucleoside hydrolase RihC.